A 251-amino-acid chain; its full sequence is Triosephosphate isomerase (251 aa).

Position 9–11 (N9–K11) interacts with substrate. Catalysis depends on H95, which acts as the Electrophile. Residue E167 is the Proton acceptor of the active site. Substrate is bound by residues G173, S213, and G234 to G235.

It belongs to the triosephosphate isomerase family. In terms of assembly, homodimer.

Its subcellular location is the cytoplasm. The enzyme catalyses D-glyceraldehyde 3-phosphate = dihydroxyacetone phosphate. The protein operates within carbohydrate biosynthesis; gluconeogenesis. It participates in carbohydrate degradation; glycolysis; D-glyceraldehyde 3-phosphate from glycerone phosphate: step 1/1. Functionally, involved in the gluconeogenesis. Catalyzes stereospecifically the conversion of dihydroxyacetone phosphate (DHAP) to D-glyceraldehyde-3-phosphate (G3P). The protein is Triosephosphate isomerase of Lactobacillus gasseri (strain ATCC 33323 / DSM 20243 / BCRC 14619 / CIP 102991 / JCM 1131 / KCTC 3163 / NCIMB 11718 / NCTC 13722 / AM63).